A 335-amino-acid chain; its full sequence is Anthranilate phosphoribosyltransferase (335 aa).

5-phospho-alpha-D-ribose 1-diphosphate is bound by residues G79, 82–83 (GD), S87, 89–92 (NIST), 107–115 (KHGNRSISS), and S119. G79 is a binding site for anthranilate. Mg(2+) is bound at residue S91. N110 is a binding site for anthranilate. Position 165 (R165) interacts with anthranilate. 2 residues coordinate Mg(2+): D224 and E225.

The protein belongs to the anthranilate phosphoribosyltransferase family. In terms of assembly, homodimer. The cofactor is Mg(2+).

It carries out the reaction N-(5-phospho-beta-D-ribosyl)anthranilate + diphosphate = 5-phospho-alpha-D-ribose 1-diphosphate + anthranilate. The protein operates within amino-acid biosynthesis; L-tryptophan biosynthesis; L-tryptophan from chorismate: step 2/5. Its function is as follows. Catalyzes the transfer of the phosphoribosyl group of 5-phosphorylribose-1-pyrophosphate (PRPP) to anthranilate to yield N-(5'-phosphoribosyl)-anthranilate (PRA). In Streptococcus mutans serotype c (strain ATCC 700610 / UA159), this protein is Anthranilate phosphoribosyltransferase.